Here is a 260-residue protein sequence, read N- to C-terminus: Carbonic anhydrase 3 (260 aa).

Position 2 is an N-acetylalanine (Ala2). Positions 3–259 (KEWGYADHNG…IKGRIVKASF (257 aa)) constitute an Alpha-carbonic anhydrase domain. Residues Ser29, Ser43, Ser50, and Ser55 each carry the phosphoserine modification. The interval 64 to 67 (KTCR) is involved in proton transfer. Position 73 is a phosphothreonine (Thr73). Residues His94, His96, and His119 each contribute to the Zn(2+) site. Position 127 is a phosphotyrosine (Tyr127). Thr176 bears the Phosphothreonine mark. 2 positions are modified to S-glutathionyl cysteine: Cys182 and Cys187. Residue 198-199 (TT) participates in substrate binding. Thr216 is subject to Phosphothreonine. At Ser219 the chain carries Phosphoserine.

Belongs to the alpha-carbonic anhydrase family. Zn(2+) serves as cofactor. In terms of processing, S-thiolated both by thiol-disulfide exchange with glutathione disulfide and by oxyradical-initiated S-thiolation with reduced glutathione. Post-translationally, S-glutathionylated in hepatocytes under oxidative stress.

The protein localises to the cytoplasm. It carries out the reaction hydrogencarbonate + H(+) = CO2 + H2O. Its activity is regulated as follows. Inhibited by acetazolamide. Reversible hydration of carbon dioxide. In Sus scrofa (Pig), this protein is Carbonic anhydrase 3.